The primary structure comprises 200 residues: CASP-like protein 1D2 (200 aa).

Residues 1–26 are disordered; it reads MASTENPDPETGKSEPIPASATTPPP. At 1–36 the chain is on the cytoplasmic side; it reads MASTENPDPETGKSEPIPASATTPPPSAASFLDCRK. Residues 37–57 traverse the membrane as a helical segment; sequence IDVIIRVLLFSATLTALIVMV. At 58 to 85 the chain is on the extracellular side; that stretch reads TSDQTEKTQLPGVSSPAPVSAEFNDSPA. The chain crosses the membrane as a helical span at residues 86-106; the sequence is FIFFVVALVVTSFYALMSTLV. Residues 107-129 lie on the Cytoplasmic side of the membrane; the sequence is SISLLLKPEFTARVSVYLASLDM. The helical transmembrane segment at 130-150 threads the bilayer; sequence VMLGILASATGTAGGVAYIAL. Topologically, residues 151–171 are extracellular; sequence KGNKEVGWNKICNVYDKFCRY. The helical transmembrane segment at 172-192 threads the bilayer; that stretch reads IATSLALSLFATLLLLVLSIC. The Cytoplasmic portion of the chain corresponds to 193–200; the sequence is SALSKRTP.

It belongs to the Casparian strip membrane proteins (CASP) family. As to quaternary structure, homodimer and heterodimers.

Its subcellular location is the cell membrane. The chain is CASP-like protein 1D2 from Arabidopsis lyrata subsp. lyrata (Lyre-leaved rock-cress).